Consider the following 221-residue polypeptide: Penicillin-binding protein activator LpoB (221 aa).

The signal sequence occupies residues 1-20 (MLNRMYRYALLATVALALSG). A lipid anchor (N-palmitoyl cysteine) is attached at C21. C21 carries the S-diacylglycerol cysteine lipid modification. A disordered region spans residues 29-82 (PAPVEEAQPGTQQPTQPVPPPTQPVPTVPSVPSIPAQPGPIEHQPENATPEPKA). Pro residues predominate over residues 44-57 (QPVPPPTQPVPTVP).

Belongs to the LpoB family. Interacts with PBP1b.

Its subcellular location is the cell outer membrane. Regulator of peptidoglycan synthesis that is essential for the function of penicillin-binding protein 1B (PBP1b). The protein is Penicillin-binding protein activator LpoB of Cronobacter turicensis (strain DSM 18703 / CCUG 55852 / LMG 23827 / z3032).